Reading from the N-terminus, the 380-residue chain is Alpha-N-acetylneuraminate alpha-2,8-sialyltransferase ST8SIA3 (380 aa).

Topologically, residues Met1–Met17 are cytoplasmic. Residues Leu18–Leu33 traverse the membrane as a helical; Signal-anchor for type II membrane protein segment. Over Lys34–Ala380 the chain is Lumenal. Residues Asn93 and Asn113 are each glycosylated (N-linked (GlcNAc...) asparagine). Disulfide bonds link Cys162-Cys313 and Cys176-Cys379. The CMP-N-acetyl-beta-neuraminate site is built by Asn167 and Asn190. A glycan (N-linked (GlcNAc...) asparagine) is linked at Asn206. 6 residues coordinate CMP-N-acetyl-beta-neuraminate: Ser300, Thr301, Gly302, Trp322, Tyr336, and His337. The active-site Proton donor/acceptor is His354.

It belongs to the glycosyltransferase 29 family. In terms of assembly, homodimer. As to expression, expressed in neurons in brain with higher expression in the striatum than in the hippocampus, cortex, and cerebellum (at protein level). Expressed in testes.

Its subcellular location is the golgi apparatus membrane. It catalyses the reaction a ganglioside GM3 (d18:1(4E)) + CMP-N-acetyl-beta-neuraminate = a ganglioside GD3 (d18:1(4E)) + CMP + H(+). The catalysed reaction is a ganglioside GM3 + CMP-N-acetyl-beta-neuraminate = a ganglioside GD3 + CMP + H(+). It carries out the reaction an N-acetyl-alpha-neuraminyl-(2-&gt;3)-beta-D-galactosyl derivative + CMP-N-acetyl-beta-neuraminate = an N-acetyl-alpha-neuraminyl-(2-&gt;8)-N-acetyl-alpha-neuraminyl-(2-&gt;3)-beta-D-galactosyl derivative + CMP + H(+). The enzyme catalyses an N-acetyl-alpha-neuraminyl-(2-&gt;3)-beta-D-galactosyl-(1-&gt;4)-N-acetyl-beta-D-glucosaminyl derivative + CMP-N-acetyl-beta-neuraminate = an alpha-Neu5Ac-(2-&gt;8)-alpha-Neu5Ac-(2-&gt;3)-beta-D-Gal-(1-&gt;4)-beta-D-GlcNAc derivative + CMP + H(+). It functions in the pathway protein modification; protein glycosylation. Functionally, catalyzes the transfer of sialic acid from a CMP-linked sialic acid donor onto a terminal alpha-2,3-, alpha-2,6-, or alpha-2,8-linked sialic acid of an acceptor, such as N-linked oligosaccharides of glycoproteins and glycolipids through alpha-2,8-linkages. Forms oligosialic and polysialic acid on various sialylated N-acetyllactosamine oligosaccharides of glycoproteins, including FETUB N-glycans, a2-HS-glycoprotein (AHSG) and alpha 2,3-sialylated glycosphingolipids, such as alpha 2,3-sialylparagloboside and ganglioside GM3 and to a lesser extent NCAM1 N-glycans. However, it is much more specific to N-linked oligosaccharides of glycoproteins than glycosphingolipids. 2,3-sialylparagloboside served as the best acceptor substrate among the glycolipids. alpha-Neu5Ac-(2-&gt;8)-alpha-Neu5Ac-(2-&gt;3)-beta-D-Gal-(1-&gt;4)-6S-D-GlcNAc and monosialyl and disialyl N-acetyllactosamines are the best acceptor substrates among glycoproteins. May play critical role in the striatum by mediating the formation of disialylated and trisialylated terminal glycotopes on N- and O-glycans of specific striatal proteins, regulating their distribution in lipid rafts, affecting their interaction with other binding partners, and subsequently modulating striatal functions. In Mus musculus (Mouse), this protein is Alpha-N-acetylneuraminate alpha-2,8-sialyltransferase ST8SIA3.